We begin with the raw amino-acid sequence, 109 residues long: Nucleoid-associated protein BCE_0021 (109 aa).

This sequence belongs to the YbaB/EbfC family. As to quaternary structure, homodimer.

The protein localises to the cytoplasm. It is found in the nucleoid. Functionally, binds to DNA and alters its conformation. May be involved in regulation of gene expression, nucleoid organization and DNA protection. This Bacillus cereus (strain ATCC 10987 / NRS 248) protein is Nucleoid-associated protein BCE_0021.